A 122-amino-acid polypeptide reads, in one-letter code: Large ribosomal subunit protein uL14 (122 aa).

It belongs to the universal ribosomal protein uL14 family. As to quaternary structure, part of the 50S ribosomal subunit. Forms a cluster with proteins L3 and L19. In the 70S ribosome, L14 and L19 interact and together make contacts with the 16S rRNA in bridges B5 and B8.

Its function is as follows. Binds to 23S rRNA. Forms part of two intersubunit bridges in the 70S ribosome. This chain is Large ribosomal subunit protein uL14, found in Bartonella quintana (strain Toulouse) (Rochalimaea quintana).